We begin with the raw amino-acid sequence, 322 residues long: Coelomocyte uptake defective protein 15 (322 aa).

The first 20 residues, 1–20 (MVNSLSRILFCSLLIFSVIS), serve as a signal peptide directing secretion. 7 N-linked (GlcNAc...) asparagine glycosylation sites follow: asparagine 62, asparagine 98, asparagine 144, asparagine 170, asparagine 180, asparagine 183, and asparagine 222. Residues 244–264 (LFGIMITFGTLLLLTALFYAA) form a helical membrane-spanning segment.

This sequence belongs to the OSTM1 family.

The protein resides in the membrane. In terms of biological role, modulates the transport of substances from the endosomal to lysosomal compartments. Plays a role in lysosome formation and function in coelomocytes. The chain is Coelomocyte uptake defective protein 15 from Caenorhabditis elegans.